A 473-amino-acid chain; its full sequence is tRNA-2-methylthio-N(6)-dimethylallyladenosine synthase (473 aa).

The region spanning 5–125 (RKLHIKSYGC…LPQLLARAKA (121 aa)) is the MTTase N-terminal domain. Residues cysteine 14, cysteine 50, cysteine 88, cysteine 166, cysteine 170, and cysteine 173 each contribute to the [4Fe-4S] cluster site. A Radical SAM core domain is found at 152–384 (RARGISAFVT…QNLIDSQQSA (233 aa)). The TRAM domain occupies 387–449 (RAAVGTTVDV…RYSLLGSLAS (63 aa)). Residues 453–462 (SRASADDAPP) are compositionally biased toward low complexity. The interval 453–473 (SRASADDAPPVGASSPAIMGV) is disordered.

This sequence belongs to the methylthiotransferase family. MiaB subfamily. Monomer. It depends on [4Fe-4S] cluster as a cofactor.

It is found in the cytoplasm. The catalysed reaction is N(6)-dimethylallyladenosine(37) in tRNA + (sulfur carrier)-SH + AH2 + 2 S-adenosyl-L-methionine = 2-methylsulfanyl-N(6)-dimethylallyladenosine(37) in tRNA + (sulfur carrier)-H + 5'-deoxyadenosine + L-methionine + A + S-adenosyl-L-homocysteine + 2 H(+). Catalyzes the methylthiolation of N6-(dimethylallyl)adenosine (i(6)A), leading to the formation of 2-methylthio-N6-(dimethylallyl)adenosine (ms(2)i(6)A) at position 37 in tRNAs that read codons beginning with uridine. This Nitrobacter hamburgensis (strain DSM 10229 / NCIMB 13809 / X14) protein is tRNA-2-methylthio-N(6)-dimethylallyladenosine synthase.